A 121-amino-acid chain; its full sequence is Parathyroid hormone-related protein (121 aa).

Residues 1 to 14 (VGVFLLSYSVPSCG) form the signal peptide. Positions 15-24 (RSVEELGRRL) are excised as a propeptide. The tract at residues 47-58 (RFFLHHLIAEIH) is important for receptor binding. A disordered region spans residues 61 to 121 (EIRATSEVSP…PGKKKKGKPG (61 aa)). A compositionally biased stretch (polar residues) spans 66 to 80 (SEVSPNSKPAPNTKN). A Nuclear localization signal motif is present at residues 98–119 (TNKVETYKEQPLKTPGKKKKGK). Residues 99–108 (NKVETYKEQP) show a composition bias toward basic and acidic residues. Over residues 112-121 (PGKKKKGKPG) the composition is skewed to basic residues.

Belongs to the parathyroid hormone family. In terms of assembly, PTHrP interacts with PTH1R (via N-terminal extracellular domain).

The protein resides in the secreted. It localises to the cytoplasm. The protein localises to the nucleus. In terms of biological role, neuroendocrine peptide which is a critical regulator of cellular and organ growth, development, migration, differentiation and survival and of epithelial calcium ion transport. Acts by binding to its receptor, PTH1R, activating G protein-coupled receptor signaling. Regulates endochondral bone development and epithelial-mesenchymal interactions during the formation of the mammary glands and teeth. Required for skeletal homeostasis. Promotes mammary mesenchyme differentiation and bud outgrowth by modulating mesenchymal cell responsiveness to BMPs. Up-regulates BMPR1A expression in the mammary mesenchyme and this increases the sensitivity of these cells to BMPs and allows them to respond to BMP4 in a paracrine and/or autocrine fashion. BMP4 signaling in the mesenchyme, in turn, triggers epithelial outgrowth and augments MSX2 expression, which causes the mammary mesenchyme to inhibit hair follicle formation within the nipple sheath. This chain is Parathyroid hormone-related protein (PTHLH), found in Ovis aries (Sheep).